A 762-amino-acid polypeptide reads, in one-letter code: Homeobox-leucine zipper protein MERISTEM L1 (762 aa).

A disordered region spans residues 13-72 (MFDMTPKNSENDLGITGSHEEDFETKSGAEVTMENPLEEELQDPNQRPNKKKRYHRHTQR). Positions 30-39 (SHEEDFETKS) are enriched in basic and acidic residues. Positions 60–71 (PNKKKRYHRHTQ) are enriched in basic residues. The segment at residues 62-121 (KKKRYHRHTQRQIQELESFFKECPHPDDKQRKELSRELSLEPLQVKFWFQNKRTQMKAQH) is a DNA-binding region (homeobox). Residues 110–192 (FQNKRTQMKA…DRISAIAAKY (83 aa)) are a coiled coil. Residues 253-484 (SEADKPMIVE…LDRQCERLAS (232 aa)) enclose the START domain.

This sequence belongs to the HD-ZIP homeobox family. Class IV subfamily. As to quaternary structure, interacts with GAI/RGA2, RGA/RGA1/GRS, RGL2/SCL19 and PDF2. Interacts with AIL7/PLT7, ANT, BBM and AIL1.

The protein localises to the nucleus. Its function is as follows. Probable transcription factor involved in cell specification and pattern formation during embryogenesis. Binds to the L1 box DNA sequence 5'-TAAATG[CT]A-3'. Plays a role in maintaining the identity of L1 cells, possibly by interacting with their L1 box or other target-gene promoters; binds to the LIP1 gene promoter and stimulates its expression upon imbibition. Acts as a positive regulator of gibberellins (GAs)-regulated epidermal gene expression (e.g. LIP1, LIP2, LTP1, FDH and PDF1). Functionally redundant to PDF2. Seems to promote cell differentiation. The protein is Homeobox-leucine zipper protein MERISTEM L1 of Arabidopsis thaliana (Mouse-ear cress).